The chain runs to 341 residues: Ketol-acid reductoisomerase (NADP(+)) (341 aa).

The KARI N-terminal Rossmann domain maps to 2-181; sequence AKVYYNGDVN…GAARAGVLET (180 aa). NADP(+) contacts are provided by residues 25–28, arginine 48, serine 52, and 82–85; these read YGSQ and DEHQ. Residue histidine 107 is part of the active site. Glycine 133 is an NADP(+) binding site. The KARI C-terminal knotted domain occupies 182–327; it reads TFKEETETDL…RELREMMPFV (146 aa). Residues aspartate 190, glutamate 194, glutamate 226, and glutamate 230 each contribute to the Mg(2+) site. Residue serine 251 participates in substrate binding.

This sequence belongs to the ketol-acid reductoisomerase family. The cofactor is Mg(2+).

It catalyses the reaction (2R)-2,3-dihydroxy-3-methylbutanoate + NADP(+) = (2S)-2-acetolactate + NADPH + H(+). It carries out the reaction (2R,3R)-2,3-dihydroxy-3-methylpentanoate + NADP(+) = (S)-2-ethyl-2-hydroxy-3-oxobutanoate + NADPH + H(+). The protein operates within amino-acid biosynthesis; L-isoleucine biosynthesis; L-isoleucine from 2-oxobutanoate: step 2/4. It participates in amino-acid biosynthesis; L-valine biosynthesis; L-valine from pyruvate: step 2/4. Its function is as follows. Involved in the biosynthesis of branched-chain amino acids (BCAA). Catalyzes an alkyl-migration followed by a ketol-acid reduction of (S)-2-acetolactate (S2AL) to yield (R)-2,3-dihydroxy-isovalerate. In the isomerase reaction, S2AL is rearranged via a Mg-dependent methyl migration to produce 3-hydroxy-3-methyl-2-ketobutyrate (HMKB). In the reductase reaction, this 2-ketoacid undergoes a metal-dependent reduction by NADPH to yield (R)-2,3-dihydroxy-isovalerate. The protein is Ketol-acid reductoisomerase (NADP(+)) of Shouchella clausii (strain KSM-K16) (Alkalihalobacillus clausii).